The following is a 96-amino-acid chain: Signal recognition particle 19 kDa protein (96 aa).

It belongs to the SRP19 family. As to quaternary structure, part of the signal recognition particle protein translocation system, which is composed of SRP and FtsY. Archaeal SRP consists of a 7S RNA molecule of 300 nucleotides and two protein subunits: SRP54 and SRP19.

The protein localises to the cytoplasm. In terms of biological role, involved in targeting and insertion of nascent membrane proteins into the cytoplasmic membrane. Binds directly to 7S RNA and mediates binding of the 54 kDa subunit of the SRP. The sequence is that of Signal recognition particle 19 kDa protein from Pyrobaculum arsenaticum (strain DSM 13514 / JCM 11321 / PZ6).